The following is a 229-amino-acid chain: HTH-type transcriptional regulator HbdR (229 aa).

The HTH tetR-type domain occupies 20 to 80; sequence EERRHQIISA…LTLKNVLDTY (61 aa). A DNA-binding region (H-T-H motif) is located at residues 43 to 62; sequence TILQIAREAKVSTGLIYQYF.

Homodimer in solution.

With respect to regulation, activity is regulated by the effector molecules 3-hydroxybenzoyl-CoA and benzoyl-CoA, which bind to HbdR, alleviating its repression on the three target promoters and inducing the expression of the hbd genes. Transcriptional regulator that controls the expression of the hbd cluster, which contains three catabolic operons and is responsible for the anaerobic degradation of 3-hydroxybenzoate. HbdR suppresses the activity of the three catabolic promoters (PhbdN, PhbdE and PhbdH) by binding to a conserved palindromic operator box. In addition, it slightly increases activity of its own promoter (PhbdR). The HbdR-mediated repression of hbd genes may play a crucial biological role in maintaining requisite hydroxybenzoate levels in the cell. This is HTH-type transcriptional regulator HbdR from Aromatoleum sp. (strain CIB) (Azoarcus sp. (strain CIB)).